The following is a 269-amino-acid chain: Formamidopyrimidine-DNA glycosylase (269 aa).

P2 serves as the catalytic Schiff-base intermediate with DNA. E3 serves as the catalytic Proton donor. K57 functions as the Proton donor; for beta-elimination activity in the catalytic mechanism. 3 residues coordinate DNA: H90, R109, and K150. Residues 235-269 (QVYGRKGEPCRVCGTPIVATKHAQRATFYCRHCQK) form an FPG-type zinc finger. R259 acts as the Proton donor; for delta-elimination activity in catalysis.

The protein belongs to the FPG family. As to quaternary structure, monomer. The cofactor is Zn(2+).

The catalysed reaction is Hydrolysis of DNA containing ring-opened 7-methylguanine residues, releasing 2,6-diamino-4-hydroxy-5-(N-methyl)formamidopyrimidine.. It carries out the reaction 2'-deoxyribonucleotide-(2'-deoxyribose 5'-phosphate)-2'-deoxyribonucleotide-DNA = a 3'-end 2'-deoxyribonucleotide-(2,3-dehydro-2,3-deoxyribose 5'-phosphate)-DNA + a 5'-end 5'-phospho-2'-deoxyribonucleoside-DNA + H(+). Its function is as follows. Involved in base excision repair of DNA damaged by oxidation or by mutagenic agents. Acts as a DNA glycosylase that recognizes and removes damaged bases. Has a preference for oxidized purines, such as 7,8-dihydro-8-oxoguanine (8-oxoG). Has AP (apurinic/apyrimidinic) lyase activity and introduces nicks in the DNA strand. Cleaves the DNA backbone by beta-delta elimination to generate a single-strand break at the site of the removed base with both 3'- and 5'-phosphates. The protein is Formamidopyrimidine-DNA glycosylase of Salmonella agona (strain SL483).